The sequence spans 229 residues: 2-C-methyl-D-erythritol 4-phosphate cytidylyltransferase (229 aa).

The protein belongs to the IspD/TarI cytidylyltransferase family. IspD subfamily.

It carries out the reaction 2-C-methyl-D-erythritol 4-phosphate + CTP + H(+) = 4-CDP-2-C-methyl-D-erythritol + diphosphate. Its pathway is isoprenoid biosynthesis; isopentenyl diphosphate biosynthesis via DXP pathway; isopentenyl diphosphate from 1-deoxy-D-xylulose 5-phosphate: step 2/6. Functionally, catalyzes the formation of 4-diphosphocytidyl-2-C-methyl-D-erythritol from CTP and 2-C-methyl-D-erythritol 4-phosphate (MEP). The sequence is that of 2-C-methyl-D-erythritol 4-phosphate cytidylyltransferase from Clostridium botulinum (strain 657 / Type Ba4).